We begin with the raw amino-acid sequence, 245 residues long: 3-deoxy-manno-octulosonate cytidylyltransferase (245 aa).

This sequence belongs to the KdsB family.

Its subcellular location is the cytoplasm. It carries out the reaction 3-deoxy-alpha-D-manno-oct-2-ulosonate + CTP = CMP-3-deoxy-beta-D-manno-octulosonate + diphosphate. Its pathway is nucleotide-sugar biosynthesis; CMP-3-deoxy-D-manno-octulosonate biosynthesis; CMP-3-deoxy-D-manno-octulosonate from 3-deoxy-D-manno-octulosonate and CTP: step 1/1. The protein operates within bacterial outer membrane biogenesis; lipopolysaccharide biosynthesis. Functionally, activates KDO (a required 8-carbon sugar) for incorporation into bacterial lipopolysaccharide in Gram-negative bacteria. This chain is 3-deoxy-manno-octulosonate cytidylyltransferase, found in Rhodopseudomonas palustris (strain BisB5).